The sequence spans 392 residues: Vascular endothelial growth factor A, long form (392 aa).

2 disordered regions span residues 1 to 44 (MTDR…VEGV) and 73 to 174 (DKPI…GPGR). A compositionally biased stretch (basic and acidic residues) spans 89-104 (PGPEKRGEEEKEEERG). Low complexity-rich tracts occupy residues 121–143 (AAVC…ASVP) and 158–174 (PRSP…GPGR). 3 cysteine pairs are disulfide-bonded: Cys-229–Cys-271, Cys-260–Cys-305, and Cys-264–Cys-307. Asn-278 is a glycosylation site (N-linked (GlcNAc...) asparagine). The span at 309 to 320 (PKKDRTKPEKKS) shows a compositional bias: basic and acidic residues. The segment at 309-337 (PKKDRTKPEKKSVRGKGKGQKRKRKKSRF) is disordered. The segment covering 321–337 (VRGKGKGQKRKRKKSRF) has biased composition (basic residues).

This sequence belongs to the PDGF/VEGF growth factor family. Homodimer; disulfide-linked. Also found as heterodimer with PGF. Interacts with NRP1. Interacts with isoform 2 of BSG. Interacts with CD82; this interaction inhibits VEGFA-mediated signaling pathway. Post-translationally, produced by use of an alternative upstream CUG codon and post-translationally processed into the N-terminal N-VEGF form and the C-terminal secreted VEGFA form. In terms of tissue distribution, in developing embryos, expressed mainly in the choroid plexus, paraventricular neuroepithelium, placenta and kidney glomeruli. Also found in bronchial epithelium, adrenal gland and in seminiferous tubules of testis. High expression continues in kidney glomeruli and choroid plexus in adults.

The protein localises to the cytoplasm. Its subcellular location is the nucleus. The protein resides in the secreted. It localises to the endoplasmic reticulum. It is found in the golgi apparatus. The protein localises to the extracellular space. Its subcellular location is the extracellular matrix. The protein resides in the cell membrane. Its function is as follows. Participates in the induction of key genes involved in the response to hypoxia and in the induction of angiogenesis such as HIF1A. Involved in protecting cells from hypoxia-mediated cell death. Functionally, growth factor active in angiogenesis, vasculogenesis and endothelial cell growth. Induces endothelial cell proliferation, promotes cell migration, inhibits apoptosis and induces permeabilization of blood vessels. Binds to the FLT1/VEGFR1 and KDR/VEGFR2 receptors, heparan sulfate and heparin. Binds to the NRP1/neuropilin-1 receptor. Binding to NRP1 receptor initiates a signaling pathway needed for motor neuron axon guidance and cell body migration, including for the caudal migration of facial motor neurons from rhombomere 4 to rhombomere 6 during embryonic development. Also binds the DEAR/FBXW7-AS1 receptor. May play a role in increasing vascular permeability during lactation, when increased transport of molecules from the blood is required for efficient milk protein synthesis. This chain is Vascular endothelial growth factor A, long form (Vegfa), found in Mus musculus (Mouse).